The chain runs to 219 residues: MASVTDGKTGVKDASDQNFDYMFKLLIIGNSSVGKTSFLFRYADDTFTPAFVSTVGIDFKVKTVYRHEKRVKLQIWDTAGQERYRTITTAYYRGAMGFILMYDITNEESFNAVQDWATQIKTYSWDNAQVILVGNKCDMEEERVVPTEKGQLLAEQLGFDFFEASAKENISVRQAFERLVDAICDKMSDSLDTDPSMLGSSKNTRLSDTPPLLQQNCSC.

Ala2 carries the N-acetylalanine modification. Residues Ser31, Ser32, Val33, Gly34, Lys35, Thr36, Ser37, Pro49, and Ser53 each contribute to the GTP site. Residue Ser32 participates in GDP binding. GDP contacts are provided by Gly34, Lys35, Thr36, and Ser37. Mg(2+) is bound at residue Thr36. The Switch 1 motif lies at 45–58; it reads DTFTPAFVSTVGID. Residues Thr54 and Asp77 each coordinate Mg(2+). The Switch 2 signature appears at 78 to 96; it reads TAGQERYRTITTAYYRGAM. Gly80 contributes to the GTP binding site. At Thr86 the chain carries Phosphothreonine; by LRRK2. GTP is bound by residues Asn135, Lys136, and Asp138. Asn135, Lys136, Asp138, Met139, Ala166, and Lys167 together coordinate GDP. Residues Ala166 and Lys167 each contribute to the GTP site. Phosphoserine occurs at positions 188 and 190. Residues Cys217 and Cys219 are each lipidated (S-geranylgeranyl cysteine). Residue Cys219 is modified to Cysteine methyl ester.

The protein belongs to the small GTPase superfamily. Rab family. As to quaternary structure, interacts with RIMS1, RIMS2, RPH3A and RPH3AL. The GTP-bound form interacts with GAS8/DRC4 (via coiled-coil domains). The GTP-bound form interacts with REP15. Interacts with GDI2, CHM and CHML; phosphorylation at Thr-86 disrupts these interactions. Interacts with MADD (via uDENN domain); the GTP-bound form is preferred for interaction. The cofactor is Mg(2+). Phosphorylation of Thr-86 in the switch II region by LRRK2 prevents the association of RAB regulatory proteins, including CHM, CHML and RAB GDP dissociation inhibitor GDI2.

The protein localises to the cell membrane. The protein resides in the golgi apparatus. The catalysed reaction is GTP + H2O = GDP + phosphate + H(+). Its activity is regulated as follows. Regulated by guanine nucleotide exchange factors (GEFs) which promote the exchange of bound GDP for free GTP. Regulated by GTPase activating proteins (GAPs) which increase the GTP hydrolysis activity. Inhibited by GDP dissociation inhibitors (GDIs) which prevent Rab-GDP dissociation. The small GTPases Rab are key regulators of intracellular membrane trafficking, from the formation of transport vesicles to their fusion with membranes. Rabs cycle between an inactive GDP-bound form and an active GTP-bound form that is able to recruit to membranes different sets of downstream effectors directly responsible for vesicle formation, movement, tethering and fusion. The polypeptide is Ras-related protein Rab-3B (Homo sapiens (Human)).